A 105-amino-acid polypeptide reads, in one-letter code: Large ribosomal subunit protein uL24 (105 aa).

The protein belongs to the universal ribosomal protein uL24 family. In terms of assembly, part of the 50S ribosomal subunit.

Functionally, one of two assembly initiator proteins, it binds directly to the 5'-end of the 23S rRNA, where it nucleates assembly of the 50S subunit. In terms of biological role, one of the proteins that surrounds the polypeptide exit tunnel on the outside of the subunit. The polypeptide is Large ribosomal subunit protein uL24 (Clostridium kluyveri (strain ATCC 8527 / DSM 555 / NBRC 12016 / NCIMB 10680 / K1)).